We begin with the raw amino-acid sequence, 526 residues long: Reticulocyte-binding protein homolog 5 (526 aa).

An N-terminal signal peptide occupies residues 1–24; that stretch reads MIRIKKKLILTIIYIHLFILNRLS. Residues 33–51 form a mediates interaction with human BSG region; it reads KNQENNLTLLPIKSTEEEK. 2 N-linked (GlcNAc...) asparagine glycosylation sites follow: N38 and N214. 2 cysteine pairs are disulfide-bonded: C224–C317 and C345–C351. The segment covering 259–279 has biased composition (acidic residues); that stretch reads EIDDKSEETDDETEEVEDSIQ. Positions 259–294 are disordered; that stretch reads EIDDKSEETDDETEEVEDSIQDTDSNHTPSNKKKND. An N-linked (GlcNAc...) asparagine glycan is attached at N297.

As to quaternary structure, forms a complex composed of RH5, P113 and human BSG/basigin; the complex bridges the merozoite and host erythrocyte membranes. Within the complex, interacts (via C-terminus) with human BSG/basigin isoform 2 (via the extracellular domain); the interaction is independent of BSG glycosylation status. Weakly interacts with P.troglodytes BSG but not with G.gorilla BSG. Also, interacts (via N-terminus) with P113; the interaction tethers RH5 to the merozoite membrane. Component of the PfRH5 adhesion complex composed of 1 copy of CyRPA, RH5 and RIPR; the complex is formed during merozoite invasion of host erythrocytes specifically at the interface between the parasite and host membranes. Within the complex, interacts with CyRPA. CyRPA recruits RIPR to the RH5-P113-BSG complex; the formation of the PfRH5 adhesion complex increases the affinity of RH5 for BSG and probably leads to the release of RH5 from P113 while maintaining the interaction of the PfRH5 adhesion complex with BSG. Cleaved into a 45kDa form during merozoite invasion of host erythrocyte.

Its subcellular location is the secreted. It is found in the cytoplasmic vesicle. The protein localises to the secretory vesicle. The protein resides in the rhoptry lumen. It localises to the host cell membrane. Essential for the invasion of host erythrocytes by blood stage merozoites. By binding P113 at the surface of the merozoite and human BSG/basigin on the erythrocyte membrane, leads to the establishment of a tight junction between the merozoite and host erythrocyte membranes. In addition, the interaction with BSG results in BSG dimerization which triggers an increase in intracellular Ca(2+) in the erythrocyte. This essential step leads to a rearrangement of the erythrocyte cytoskeleton required for the merozoite invasion. The polypeptide is Reticulocyte-binding protein homolog 5 (Plasmodium falciparum (isolate 3D7)).